The following is a 521-amino-acid chain: Exodeoxyribonuclease 7 large subunit (521 aa).

Residues 494 to 521 are disordered; it reads ATSGAARPKPAAKPSTKAKEPGNQGSLF. Positions 498-508 are enriched in low complexity; sequence AARPKPAAKPS.

The protein belongs to the XseA family. Heterooligomer composed of large and small subunits.

The protein resides in the cytoplasm. It catalyses the reaction Exonucleolytic cleavage in either 5'- to 3'- or 3'- to 5'-direction to yield nucleoside 5'-phosphates.. Bidirectionally degrades single-stranded DNA into large acid-insoluble oligonucleotides, which are then degraded further into small acid-soluble oligonucleotides. The polypeptide is Exodeoxyribonuclease 7 large subunit (Mesorhizobium japonicum (strain LMG 29417 / CECT 9101 / MAFF 303099) (Mesorhizobium loti (strain MAFF 303099))).